The sequence spans 291 residues: MASKKEIKDQIISVTNTKKITKAMEMVAVSKMRKTEERMRLGRPYSEIIKKVIHHVLQGSLEYKHSYLEKRNDKRIGIIIVSTDRGLCGSLNTNLFKQVLFKIQNFAKINIPCDLILFGLKSLSVFKLYGSSIISSVTNLGETPDLSKLIGSIKIILEKYQNNQIDRLFIAYNKFHNKLSQYPKISQLLPLYNEKNIFSNKKIKWDYLYEPESKLILDTLFDRYIESQIYQSLLENIASEQAARMVAMKTATDNSGNRIKELQLIYNKVRQANITQELTEIVAGASAVSVD.

The protein belongs to the ATPase gamma chain family. In terms of assembly, F-type ATPases have 2 components, CF(1) - the catalytic core - and CF(0) - the membrane proton channel. CF(1) has five subunits: alpha(3), beta(3), gamma(1), delta(1), epsilon(1). CF(0) has three main subunits: a, b and c.

The protein localises to the cell membrane. Its function is as follows. Produces ATP from ADP in the presence of a proton gradient across the membrane. The gamma chain is believed to be important in regulating ATPase activity and the flow of protons through the CF(0) complex. This Buchnera aphidicola subsp. Schizaphis graminum (strain Sg) protein is ATP synthase gamma chain.